The following is a 189-amino-acid chain: MYVSIEGIDTAGKSTQLNILEKTFPNAIFTKEPGGTALGIKLRAMALGGEAKSSIAEMFLFLADRAEHIEEVIKPNKNSLVISDRSVVSGIAYANQFEIDKLIELNLIATSNILPTHIILLELTPEELKFRLSQKANDSIELRGIDYLINIQNRMKETIKKLNVNHIFIDASLKIEDIAKTIEDFLNVK.

7–14 (GIDTAGKS) is a binding site for ATP.

The protein belongs to the thymidylate kinase family.

The catalysed reaction is dTMP + ATP = dTDP + ADP. Functionally, phosphorylation of dTMP to form dTDP in both de novo and salvage pathways of dTTP synthesis. In Aliarcobacter butzleri (strain RM4018) (Arcobacter butzleri), this protein is Thymidylate kinase.